Consider the following 172-residue polypeptide: Putative metal-dependent hydrolase OB0782 (172 aa).

Zn(2+) contacts are provided by H64, H155, and H159.

Belongs to the metal hydrolase YfiT family. In terms of assembly, homodimer. Zn(2+) is required as a cofactor.

It is found in the cytoplasm. In terms of biological role, possible metal-dependent hydrolase. The chain is Putative metal-dependent hydrolase OB0782 from Oceanobacillus iheyensis (strain DSM 14371 / CIP 107618 / JCM 11309 / KCTC 3954 / HTE831).